The chain runs to 100 residues: uncharacterized protein (100 aa).

This is an uncharacterized protein from Clostridium tetanomorphum.